Here is a 140-residue protein sequence, read N- to C-terminus: Calcium-binding protein B (140 aa).

EF-hand domains are found at residues 38-73 (ATLS…INQP) and 74-109 (KTYL…KTSS). Ca(2+) is bound by residues Asp-51, Asn-53, Ser-55, Asp-57, and Glu-62.

The sequence is that of Calcium-binding protein B (cbpB) from Dictyostelium discoideum (Social amoeba).